Consider the following 499-residue polypeptide: Sialic acid-binding Ig-like lectin 8 (499 aa).

The signal sequence occupies residues 1–16 (MLLLLLLLPLLWGTKG). At 17–363 (MEGDRQYGDG…RPVSQVTLAA (347 aa)) the chain is on the extracellular side. A carbohydrate-binding positions include Tyr23, 72 to 75 (RPYQ), Arg125, and 134 to 138 (SYKSQ). One can recognise an Ig-like V-type domain in the interval 40-123 (GLCVHVPCSF…ARKRDKGSYF (84 aa)). 3 disulfides stabilise this stretch: Cys42–Cys181, Cys47–Cys107, and Cys175–Cys224. Ig-like C2-type domains lie at 157–240 (PDIL…STVR) and 246–344 (PPWN…LSLS). Residue Asn172 is glycosylated (N-linked (GlcNAc...) asparagine). Asn249 and Asn267 each carry an N-linked (GlcNAc...) asparagine glycan. An intrachain disulfide couples Cys283 to Cys328. A helical transmembrane segment spans residues 364 to 384 (VGGAGATALAFLSFCIIFIIV). Residues 385 to 499 (RSCRKKSARP…HNPSSKEVRG (115 aa)) lie on the Cytoplasmic side of the membrane. The segment at 410–443 (RGSASQGPLTESWKDGNPLKKPPPAVAPSSGEEG) is disordered. The ITIM motif motif lies at 445-450 (LHYATL). Disordered stretches follow at residues 451-470 (SFHK…DSEY) and 478-499 (RETA…EVRG). The short motif at 468–473 (SEYSEI) is the SLAM-like motif element.

It belongs to the immunoglobulin superfamily. SIGLEC (sialic acid binding Ig-like lectin) family. In terms of tissue distribution, expressed specifically on blood cells namely basophil, mast cells and eosinophils.

The protein localises to the membrane. Putative adhesion molecule that mediates sialic-acid dependent binding to blood cells. Preferentially binds to alpha-2,3-linked sialic acid. Also binds to alpha-2,6-linked sialic acid. The sialic acid recognition site may be masked by cis interactions with sialic acids on the same cell surface. Recognizes simultaneously epitopes having a terminal N-acetylneuraminic acid (sialic acid) and an underlying 6-O-sulfated galactose. Preferentially binds to Gal-6-sulfated sialyl-Lewis X glycan epitopes. This chain is Sialic acid-binding Ig-like lectin 8 (SIGLEC8), found in Homo sapiens (Human).